The following is a 368-amino-acid chain: Peptide chain release factor 2 (368 aa).

Residue Q250 is modified to N5-methylglutamine.

The protein belongs to the prokaryotic/mitochondrial release factor family. Methylated by PrmC. Methylation increases the termination efficiency of RF2.

The protein localises to the cytoplasm. Functionally, peptide chain release factor 2 directs the termination of translation in response to the peptide chain termination codons UGA and UAA. The protein is Peptide chain release factor 2 of Rickettsia bellii (strain RML369-C).